The following is a 329-amino-acid chain: Cytosolic arginine sensor for mTORC1 subunit 1 (329 aa).

A Phosphoserine; by PKB/AKT1 modification is found at S14. 2 consecutive ACT domains span residues A72–A138 and G260–Q321. L-arginine contacts are provided by residues S111–V112, G274, I280–V281, and T300–D304.

The protein belongs to the GATS family. As to quaternary structure, forms homodimers and heterodimers with CASTOR2. Interacts with the GATOR2 complex which is composed of MIOS, SEC13, SEH1L, WDR24 and WDR59; the interaction is negatively regulated by arginine. Interacts with TM4SF5; the interaction is positively regulated by leucine and is negatively regulated by arginine. In terms of processing, phosphorylation at Ser-14 by AKT1, promoting the interaction between CASTOR1 and RNF167. Post-translationally, ubiquitinated by RNF167 via 'Lys-29'-polyubiquitination, leading to its degradation, releasing the GATOR2 complex. Ubiquitination by RNF167 is promoted by phosphorylation at Ser-14 by AKT1. As to expression, widely expressed.

Its subcellular location is the cytoplasm. It localises to the cytosol. Functionally, functions as an intracellular arginine sensor within the amino acid-sensing branch of the TORC1 signaling pathway. As a homodimer or a heterodimer with CASTOR2, binds and inhibits the GATOR subcomplex GATOR2 and thereby mTORC1. Binding of arginine to CASTOR1 allosterically disrupts the interaction of CASTOR1-containing dimers with GATOR2 which can in turn activate mTORC1 and the TORC1 signaling pathway. The protein is Cytosolic arginine sensor for mTORC1 subunit 1 of Homo sapiens (Human).